Here is a 351-residue protein sequence, read N- to C-terminus: Cell cycle control protein 50B (351 aa).

The Cytoplasmic portion of the chain corresponds to 1 to 33; sequence MTWSATARGAHQPDNTAFTQQRLPAWQPLLSAS. Residues 34 to 54 form a helical membrane-spanning segment; sequence IALPLFFCAGLAFIGLGLGLY. Over 55–315 the chain is Exoplasmic loop; that stretch reads YSSNGIKELE…SISWMGGKNP (261 aa). N-linked (GlcNAc...) asparagine glycans are attached at residues Asn75, Asn213, and Asn286. A helical transmembrane segment spans residues 316–336; sequence FLGIAYLVVGSLCILTGFVML. Topologically, residues 337 to 351 are cytoplasmic; sequence VVYIRYQDQDDDDEE.

It belongs to the CDC50/LEM3 family. In terms of assembly, component of a P4-ATPase flippase complex which consists of a catalytic alpha subunit and an accessory beta subunit. Interacts with alpha subunits ATP8A1, ATP8B1, ATP8B2 and ATP8B4.

The protein localises to the cell membrane. Accessory component of a P4-ATPase flippase complex which catalyzes the hydrolysis of ATP coupled to the transport of aminophospholipids from the outer to the inner leaflet of various membranes and ensures the maintenance of asymmetric distribution of phospholipids. Phospholipid translocation also seems to be implicated in vesicle formation and in uptake of lipid signaling molecules. The beta subunit may assist in binding of the phospholipid substrate. Can mediate the export of alpha subunits ATP8A1, ATP8B1, ATP8B2 and ATP8B4 from the ER to the plasma membrane. This is Cell cycle control protein 50B (TMEM30B) from Homo sapiens (Human).